An 86-amino-acid polypeptide reads, in one-letter code: Small ribosomal subunit protein uS17 (86 aa).

It belongs to the universal ribosomal protein uS17 family. In terms of assembly, part of the 30S ribosomal subunit.

Functionally, one of the primary rRNA binding proteins, it binds specifically to the 5'-end of 16S ribosomal RNA. The protein is Small ribosomal subunit protein uS17 of Streptococcus pyogenes serotype M3 (strain ATCC BAA-595 / MGAS315).